The chain runs to 457 residues: Cysteine--tRNA ligase (457 aa).

C28 provides a ligand contact to Zn(2+). The 'HIGH' region signature appears at 30–40; the sequence is PTVYDTAHIGN. C212, H237, and E241 together coordinate Zn(2+). Positions 270-274 match the 'KMSKS' region motif; sequence KMSKS. K273 lines the ATP pocket.

It belongs to the class-I aminoacyl-tRNA synthetase family. As to quaternary structure, monomer. The cofactor is Zn(2+).

The protein resides in the cytoplasm. The enzyme catalyses tRNA(Cys) + L-cysteine + ATP = L-cysteinyl-tRNA(Cys) + AMP + diphosphate. The sequence is that of Cysteine--tRNA ligase from Wolbachia pipientis wMel.